The primary structure comprises 101 residues: NADH-quinone oxidoreductase subunit K (101 aa).

3 consecutive transmembrane segments (helical) span residues 4 to 24, 30 to 50, and 62 to 82; these read LGHM…GIFL, IVLL…FVAF, and FVFF…AILV.

Belongs to the complex I subunit 4L family. As to quaternary structure, NDH-1 is composed of 14 different subunits. Subunits NuoA, H, J, K, L, M, N constitute the membrane sector of the complex.

The protein resides in the cell inner membrane. It carries out the reaction a quinone + NADH + 5 H(+)(in) = a quinol + NAD(+) + 4 H(+)(out). In terms of biological role, NDH-1 shuttles electrons from NADH, via FMN and iron-sulfur (Fe-S) centers, to quinones in the respiratory chain. The immediate electron acceptor for the enzyme in this species is believed to be ubiquinone. Couples the redox reaction to proton translocation (for every two electrons transferred, four hydrogen ions are translocated across the cytoplasmic membrane), and thus conserves the redox energy in a proton gradient. This chain is NADH-quinone oxidoreductase subunit K, found in Stenotrophomonas maltophilia (strain R551-3).